We begin with the raw amino-acid sequence, 324 residues long: tRNA dimethylallyltransferase (324 aa).

Gly17–Thr24 is an ATP binding site. Thr19–Thr24 serves as a coordination point for substrate. Interaction with substrate tRNA stretches follow at residues Asp42–Leu45, Gln166–Arg170, and Arg251–Arg256.

The protein belongs to the IPP transferase family. Monomer. It depends on Mg(2+) as a cofactor.

It catalyses the reaction adenosine(37) in tRNA + dimethylallyl diphosphate = N(6)-dimethylallyladenosine(37) in tRNA + diphosphate. Catalyzes the transfer of a dimethylallyl group onto the adenine at position 37 in tRNAs that read codons beginning with uridine, leading to the formation of N6-(dimethylallyl)adenosine (i(6)A). This Burkholderia pseudomallei (strain 1106a) protein is tRNA dimethylallyltransferase.